A 625-amino-acid chain; its full sequence is tRNA uridine 5-carboxymethylaminomethyl modification enzyme MnmG (625 aa).

Residues 11-16, Val-123, and Ser-178 contribute to the FAD site; that span reads GAGHAG. 271-285 is an NAD(+) binding site; sequence GPRYCPSIETKIVTF. Residue Gln-368 participates in FAD binding.

It belongs to the MnmG family. As to quaternary structure, homodimer. Heterotetramer of two MnmE and two MnmG subunits. FAD is required as a cofactor.

It localises to the cytoplasm. NAD-binding protein involved in the addition of a carboxymethylaminomethyl (cmnm) group at the wobble position (U34) of certain tRNAs, forming tRNA-cmnm(5)s(2)U34. This is tRNA uridine 5-carboxymethylaminomethyl modification enzyme MnmG from Bacteroides fragilis (strain ATCC 25285 / DSM 2151 / CCUG 4856 / JCM 11019 / LMG 10263 / NCTC 9343 / Onslow / VPI 2553 / EN-2).